We begin with the raw amino-acid sequence, 497 residues long: Glycerol kinase (497 aa).

Residue Thr-13 participates in ADP binding. Residues Thr-13, Thr-14, and Ser-15 each contribute to the ATP site. Thr-13 is a sn-glycerol 3-phosphate binding site. Residue Arg-17 participates in ADP binding. Sn-glycerol 3-phosphate-binding residues include Arg-83, Glu-84, and Tyr-135. Glycerol is bound by residues Arg-83, Glu-84, and Tyr-135. His-231 carries the phosphohistidine; by HPr modification. Asp-245 serves as a coordination point for sn-glycerol 3-phosphate. Residues Asp-245 and Gln-246 each contribute to the glycerol site. ADP contacts are provided by Thr-267 and Gly-310. 4 residues coordinate ATP: Thr-267, Gly-310, Gln-314, and Gly-411. ADP is bound by residues Gly-411 and Asn-415.

Belongs to the FGGY kinase family. In terms of assembly, homotetramer and homodimer (in equilibrium). The phosphoenolpyruvate-dependent sugar phosphotransferase system (PTS), including enzyme I, and histidine-containing protein (HPr) are required for the phosphorylation, which leads to the activation of the enzyme.

It carries out the reaction glycerol + ATP = sn-glycerol 3-phosphate + ADP + H(+). It participates in polyol metabolism; glycerol degradation via glycerol kinase pathway; sn-glycerol 3-phosphate from glycerol: step 1/1. With respect to regulation, activated by phosphorylation and inhibited by fructose 1,6-bisphosphate (FBP). Its function is as follows. Key enzyme in the regulation of glycerol uptake and metabolism. Catalyzes the phosphorylation of glycerol to yield sn-glycerol 3-phosphate. The sequence is that of Glycerol kinase from Listeria innocua serovar 6a (strain ATCC BAA-680 / CLIP 11262).